Reading from the N-terminus, the 167-residue chain is MITLIIFSFLSFLLGIILSFTAYKFRSQEDPIVEIVNELLPQSQCAQCGYSGCYPYAKAIVENSEKINKCIPGGTDLISAISSVLSIEVPEKNLIITHKKQKNNTVLINESNCVGCSKCASFCPVDAIVGAPNFIHTVLQEFCTGCNICLLHCPTNCIEIKKETYEE.

Positions 1 to 22 (MITLIIFSFLSFLLGIILSFTA) are hydrophobic. Residues 28 to 87 (QEDPIVEIVNELLPQSQCAQCGYSGCYPYAKAIVENSEKINKCIPGGTDLISAISSVLSI) enclose the 4Fe-4S domain. [4Fe-4S] cluster contacts are provided by Cys-45, Cys-48, Cys-53, Cys-70, Cys-113, Cys-116, Cys-119, Cys-123, Cys-143, Cys-146, Cys-149, and Cys-153. 4Fe-4S ferredoxin-type domains follow at residues 104–133 (NTVL…GAPN) and 134–163 (FIHT…IKKE).

The protein belongs to the 4Fe4S bacterial-type ferredoxin family. RnfB subfamily. As to quaternary structure, the complex is composed of six subunits: RnfA, RnfB, RnfC, RnfD, RnfE and RnfG. Requires [4Fe-4S] cluster as cofactor.

It is found in the cell inner membrane. Functionally, part of a membrane-bound complex that couples electron transfer with translocation of ions across the membrane. The chain is Ion-translocating oxidoreductase complex subunit B from Buchnera aphidicola subsp. Acyrthosiphon pisum (strain Tuc7).